An 875-amino-acid polypeptide reads, in one-letter code: Alanine--tRNA ligase (875 aa).

The Zn(2+) site is built by His564, His568, Cys666, and His670.

Belongs to the class-II aminoacyl-tRNA synthetase family. In terms of assembly, homotetramer. Zn(2+) serves as cofactor.

The protein localises to the cytoplasm. It carries out the reaction tRNA(Ala) + L-alanine + ATP = L-alanyl-tRNA(Ala) + AMP + diphosphate. Its function is as follows. Catalyzes the attachment of alanine to tRNA(Ala) in a two-step reaction: alanine is first activated by ATP to form Ala-AMP and then transferred to the acceptor end of tRNA(Ala). Also edits incorrectly charged Ser-tRNA(Ala) and Gly-tRNA(Ala) via its editing domain. This is Alanine--tRNA ligase from Klebsiella pneumoniae subsp. pneumoniae (strain ATCC 700721 / MGH 78578).